The chain runs to 326 residues: tRNA uridine(34) hydroxylase (326 aa).

The region spanning 123–217 (SDPDVLLVDT…YLEEVKQEES (95 aa)) is the Rhodanese domain. Cys177 acts as the Cysteine persulfide intermediate in catalysis. Positions 304 to 326 (VSQVILSRRTEKEDQRQAQNKKA) are disordered.

The protein belongs to the TrhO family.

It carries out the reaction uridine(34) in tRNA + AH2 + O2 = 5-hydroxyuridine(34) in tRNA + A + H2O. In terms of biological role, catalyzes oxygen-dependent 5-hydroxyuridine (ho5U) modification at position 34 in tRNAs. This chain is tRNA uridine(34) hydroxylase, found in Shewanella sediminis (strain HAW-EB3).